A 328-amino-acid polypeptide reads, in one-letter code: scyllo-inositol 2-dehydrogenase (NADP(+)) IolU (328 aa).

The protein belongs to the Gfo/Idh/MocA family.

It catalyses the reaction scyllo-inositol + NADP(+) = scyllo-inosose + NADPH + H(+). Its function is as follows. Catalyzes the NADPH-dependent reduction of scyllo-inosose (SIS) to scyllo-inositol (SI) in vitro, but is unable to dehydrogenate scyllo-inositol and myo-inositol. Is less efficient than the functional paralog IolW. Under physiological conditions, may primarily function as an NADPH-dependent oxidoreductase that reduces carbonyl group(s) in its substrates. Cannot use NADH instead of NADPH. This chain is scyllo-inositol 2-dehydrogenase (NADP(+)) IolU, found in Bacillus subtilis (strain 168).